Here is a 524-residue protein sequence, read N- to C-terminus: MDDGDLGNNHHNFLGGAGNRLSAESLPLIDTRLLSQSELRALSQCSSLSPSSSASLAASAGGDDDLTPKIDRSVFNESAGSRKQTFLRLRLARHPQPPEEPPSPQRQRDDSSREEQTQVASLLRSLFNVDSNQSKEEEDEGEEELEDNEGQIHYNSYVYQRPNLDSIQNVLIQGTSGNKIKRKRGRPRKIRNPSEENEVLDLTGEASTYVFVDKTSSNLGMVSRVGSSGISLDSNSVKRKRGRPPKNKEEIMNLEKRDSAIVNISAFDKEELVVNLENREGTIVDLSALASVSEDPYEEELRRITVGLKTKEEILGFLEQLNGEWVNIGKKKKVVNACDYGGYLPRGWRLMLYIKRKGSNLLLACRRYISPDGQQFETCKEVSTYLRSLLESPSKNQHYYLQSDNKTLGQQPVIANESLLGNSDSMDSETMQYLESGRTSSEVFEEAKAVENGNEADRVKTSLMQKDDNADFLNGVEDNDDDMKKRDGNMENLATLSNSEMTKSLPTTTNELQQYFSSQINRVQ.

Positions 45–60 are enriched in low complexity; it reads CSSLSPSSSASLAASA. The interval 45–151 is disordered; sequence CSSLSPSSSA…EEELEDNEGQ (107 aa). Residues 75–84 are compositionally biased toward polar residues; sequence FNESAGSRKQ. The span at 106 to 116 shows a compositional bias: basic and acidic residues; the sequence is RQRDDSSREEQ. Acidic residues predominate over residues 136–149; sequence EEEDEGEEELEDNE. Residues 334-406 enclose the MBD domain; sequence VVNACDYGGY…QHYYLQSDNK (73 aa).

As to expression, expressed in shoot meristems, roots (vasculature and tips), hypocotyls (vasculature), cotyledons (vasculature and hydathodes), young leaves, buds, flowers and stems. Detected in stomata.

It localises to the nucleus. Its function is as follows. Probable transcriptional regulator. May regulates developmental traits such as flowering time. This is Methyl-CpG-binding domain-containing protein 8 (MBD8) from Arabidopsis thaliana (Mouse-ear cress).